A 358-amino-acid polypeptide reads, in one-letter code: MDLPVSAIGFEGFEKRLEISFVEPGLFADPNGKGLRSLTKAQLDEILGPAECTIVDNLSNDYVDSYVLSESSLFVYSYKIIIKTCGTTKLLLAIPPILRLAETLSLKVQDVRYTRGSFIFPGAQSFPHRHFSEEVAVLDGYFGKLAAGSKAVIMGNPDKTQKWHVYSASAGTVQCNDPVYTLEMCMAGLDREKASVFYKTEESSAAHMTVRSGIRKILPKFEICDFEFEPCGYSMNSIEGAAVSTIHITPEDGFSYASFESVGYDPKTTELGPLVERVLACFEPAEFSIALHADVATKLLERVCSVDVKGYSLAEWSPEEFGKGGSIVYQKFTRTPYCESPKSVLKGCWKEEEKEEKE.

Active-site residues include Glu-11 and Glu-14. Ser-71 (schiff-base intermediate with substrate; via pyruvic acid) is an active-site residue. Ser-71 is subject to Pyruvic acid (Ser); by autocatalysis. Cys-85 acts as the Proton donor; for catalytic activity in catalysis. Catalysis depends on proton acceptor; for processing activity residues Ser-234 and His-247.

Belongs to the eukaryotic AdoMetDC family. The cofactor is pyruvate. In terms of processing, is synthesized initially as an inactive proenzyme. Formation of the active enzyme involves a self-maturation process in which the active site pyruvoyl group is generated from an internal serine residue via an autocatalytic post-translational modification. Two non-identical subunits are generated from the proenzyme in this reaction, and the pyruvate is formed at the N-terminus of the alpha chain, which is derived from the carboxyl end of the proenzyme. The post-translation cleavage follows an unusual pathway, termed non-hydrolytic serinolysis, in which the side chain hydroxyl group of the serine supplies its oxygen atom to form the C-terminus of the beta chain, while the remainder of the serine residue undergoes an oxidative deamination to produce ammonia and the pyruvoyl group blocking the N-terminus of the alpha chain.

It carries out the reaction S-adenosyl-L-methionine + H(+) = S-adenosyl 3-(methylsulfanyl)propylamine + CO2. It participates in amine and polyamine biosynthesis; S-adenosylmethioninamine biosynthesis; S-adenosylmethioninamine from S-adenosyl-L-methionine: step 1/1. This chain is S-adenosylmethionine decarboxylase proenzyme (SAMDC), found in Solanum chilense (Tomato).